We begin with the raw amino-acid sequence, 362 residues long: P2Y purinoceptor 1 (362 aa).

At 1–40 (MTEALISAALNGTQPELLAGGWAAGNASTKCSLTKTGFQF) the chain is on the extracellular side. Asparagine 11 and asparagine 26 each carry an N-linked (GlcNAc...) asparagine glycan. Cystine bridges form between cysteine 31–cysteine 285 and cysteine 113–cysteine 191. Lysine 35 contacts ADP. A helical membrane pass occupies residues 41–63 (YYLPTVYILVFITGFLGNSVAIW). Over 64-76 (MFVFHMRPWSGIS) the chain is Cytoplasmic. The chain crosses the membrane as a helical span at residues 77–98 (VYMFNLALADFLYVLTLPALIF). Residues 99-114 (YYFNKTDWIFGDVMCK) are Extracellular-facing. Asparagine 102 carries an N-linked (GlcNAc...) asparagine glycan. A helical transmembrane segment spans residues 115–136 (LQRFIFHVNLYGSILFLTCISV). Residues 137–155 (HRYTGVVHPLKSLGRLKKK) are Cytoplasmic-facing. The chain crosses the membrane as a helical span at residues 156-177 (NAVYVSSLVWALVVAVIAPILF). Over 178 to 203 (YSGTGVRRNKTITCYDTTADEYLRSY) the chain is Extracellular. N-linked (GlcNAc...) asparagine glycosylation is present at asparagine 186. 192-194 (YDT) serves as a coordination point for ADP. Residues 204–226 (FVYSMCTTVFMFCIPFIVILGCY) traverse the membrane as a helical segment. Over 227–249 (GLIVKALIYKDLDNSPLRRKSIY) the chain is Cytoplasmic. Residues 250-273 (LVIIVLTVFAVSYLPFHVMKTLNL) traverse the membrane as a helical segment. ADP is bound by residues 272-276 (NLRAR), 292-295 (YATY), and arginine 299. Topologically, residues 274–292 (RARLDFQTPQMCAFNDKVY) are extracellular. Residues 293–314 (ATYQVTRGLASLNSCVDPILYF) traverse the membrane as a helical segment. Residues 315–362 (LAGDTFRRRLSRATRKSSRRSEPNVQSKSEEMTLNILTEYKQNGDTSL) are Cytoplasmic-facing.

The protein belongs to the G-protein coupled receptor 1 family. As to expression, mainly found in blood, brain, and lung. To a lesser extent in stomach, gut and skeletal muscle.

It is found in the cell membrane. In terms of biological role, receptor for extracellular adenine nucleotides such as ADP. In platelets, binding to ADP leads to mobilization of intracellular calcium ions via activation of phospholipase C, a change in platelet shape, and ultimately platelet aggregation. This chain is P2Y purinoceptor 1 (P2RY1), found in Meleagris gallopavo (Wild turkey).